A 445-amino-acid chain; its full sequence is UPF0210 protein SPT_0285 (445 aa).

This sequence belongs to the UPF0210 family. In terms of assembly, homodimer.

The polypeptide is UPF0210 protein SPT_0285 (Streptococcus pneumoniae (strain Taiwan19F-14)).